A 642-amino-acid polypeptide reads, in one-letter code: Putative ATP-binding protein YdiF (642 aa).

ABC transporter domains lie at 4 to 259 (LQVN…EKDL) and 327 to 541 (LRVQ…ELEK). ATP contacts are provided by residues 36–43 (GRNGAGKS) and 360–367 (GPNGIGKS). 2 stretches are compositionally biased toward basic and acidic residues: residues 541 to 550 (KMNQQEETDK) and 557 to 567 (SDSKRSYEEEK). The tract at residues 541–567 (KMNQQEETDKTPATVKSDSKRSYEEEK) is disordered.

Belongs to the ABC transporter superfamily. ABCF family. YdiF subfamily.

In Bacillus subtilis (strain 168), this protein is Putative ATP-binding protein YdiF (ydiF).